The sequence spans 685 residues: DNA ligase (685 aa).

NAD(+) is bound by residues 47–51, 96–97, and glutamate 125; these read DSEYD and SL. Catalysis depends on lysine 127, which acts as the N6-AMP-lysine intermediate. 4 residues coordinate NAD(+): arginine 148, glutamate 185, lysine 304, and lysine 328. Cysteine 422, cysteine 425, cysteine 440, and cysteine 446 together coordinate Zn(2+). The 81-residue stretch at 605 to 685 folds into the BRCT domain; that stretch reads AEAQPLKGQT…ELLALLAANA (81 aa).

This sequence belongs to the NAD-dependent DNA ligase family. LigA subfamily. Requires Mg(2+) as cofactor. It depends on Mn(2+) as a cofactor.

It catalyses the reaction NAD(+) + (deoxyribonucleotide)n-3'-hydroxyl + 5'-phospho-(deoxyribonucleotide)m = (deoxyribonucleotide)n+m + AMP + beta-nicotinamide D-nucleotide.. Functionally, DNA ligase that catalyzes the formation of phosphodiester linkages between 5'-phosphoryl and 3'-hydroxyl groups in double-stranded DNA using NAD as a coenzyme and as the energy source for the reaction. It is essential for DNA replication and repair of damaged DNA. The sequence is that of DNA ligase from Shewanella baltica (strain OS223).